The following is a 773-amino-acid chain: Cytochrome c oxidase subunit 1+2 (773 aa).

The COX1 stretch occupies residues 1–491 (MKLLEIYDKQ…LIASYGSLIT (491 aa)). Residues 41-61 (TMYITFSIFAGIIGTLLSLVI) traverse the membrane as a helical segment. Glu-64 is a Ca(2+) binding site. Residue His-85 coordinates Fe(II)-heme a. The next 6 membrane-spanning stretches (helical) occupy residues 87–111 (LIMI…NWFL), 130–150 (LWLI…GIGA), 173–193 (VGIL…INFL), 211–231 (LFVW…PVLA), 262–278 (LFHP…FGII), and 290–310 (IFGV…GFLV). Cu cation is bound at residue His-264. Residues 264–268 (HPEVY) constitute a cross-link (1'-histidyl-3'-tyrosine (His-Tyr)). Tyr-268 contributes to the O2 binding site. Cu cation contacts are provided by His-314 and His-315. Transmembrane regions (helical) follow at residues 335 to 355 (IIAI…WGGV) and 362 to 382 (MLFV…GVVL). Residues His-392 and Asp-393 each contribute to the Mg(2+) site. 5 helical membrane passes run 396–416 (YVVA…IFAG), 444–464 (FWTM…LGLA), 483–503 (IASY…VNIF), 555–575 (IFFY…RILW), and 604–624 (GTVI…LIAI). His-400 contacts heme a3. His-402 contacts Fe(II)-heme a. The segment at 492–773 (AFGLLFFFVN…VQEYLGRLYK (282 aa)) is COX2. Cu cation is bound by residues His-709, Cys-744, Cys-748, and His-752.

This sequence in the N-terminal section; belongs to the heme-copper respiratory oxidase family. The protein in the C-terminal section; belongs to the cytochrome c oxidase subunit 2 family. As to quaternary structure, component of the cytochrome c oxidase (complex IV, CIV), a multisubunit enzyme composed of a catalytic core of 3 subunits and several supernumerary subunits. The complex exists as a monomer or a dimer and forms supercomplexes (SCs) in the inner mitochondrial membrane with ubiquinol-cytochrome c oxidoreductase (cytochrome b-c1 complex, complex III, CIII). The cofactor is heme. Cu cation is required as a cofactor.

The protein resides in the mitochondrion inner membrane. It carries out the reaction 4 Fe(II)-[cytochrome c] + O2 + 8 H(+)(in) = 4 Fe(III)-[cytochrome c] + 2 H2O + 4 H(+)(out). It participates in energy metabolism; oxidative phosphorylation. Functionally, component of the cytochrome c oxidase, the last enzyme in the mitochondrial electron transport chain which drives oxidative phosphorylation. The respiratory chain contains 3 multisubunit complexes succinate dehydrogenase (complex II, CII), ubiquinol-cytochrome c oxidoreductase (cytochrome b-c1 complex, complex III, CIII) and cytochrome c oxidase (complex IV, CIV), that cooperate to transfer electrons derived from NADH and succinate to molecular oxygen, creating an electrochemical gradient over the inner membrane that drives transmembrane transport and the ATP synthase. Cytochrome c oxidase is the component of the respiratory chain that catalyzes the reduction of oxygen to water. Electrons originating from reduced cytochrome c in the intermembrane space (IMS) are transferred via the dinuclear copper A center (CU(A)) of subunit 2 and heme A of subunit 1 to the active site in subunit 1, a binuclear center (BNC) formed by heme A3 and copper B (CU(B)). The BNC reduces molecular oxygen to 2 water molecules using 4 electrons from cytochrome c in the IMS and 4 protons from the mitochondrial matrix. This Dictyostelium citrinum (Slime mold) protein is Cytochrome c oxidase subunit 1+2 (cox1/2).